Consider the following 759-residue polypeptide: Subtilisin-like protease SBT3.16 (759 aa).

A signal peptide spans 1-33 (MELSSLIVPNNKKHFVVVFIGLVLIFKIALITA). Positions 34 to 119 (ANEKSQIYTV…VTRSKNMKLK (86 aa)) are cleaved as a propeptide — activation peptide. The Inhibitor I9 domain maps to 41–118 (YTVHLGERQH…RVTRSKNMKL (78 aa)). A Peptidase S8 domain is found at 124-608 (SDYLGLTSAA…GGLVNPVKVA (485 aa)). Asp-153 serves as the catalytic Charge relay system. 2 N-linked (GlcNAc...) asparagine glycosylation sites follow: Asn-186 and Asn-209. His-229 acts as the Charge relay system in catalysis. Asn-371 carries an N-linked (GlcNAc...) asparagine glycan. Ser-539 functions as the Charge relay system in the catalytic mechanism. 2 N-linked (GlcNAc...) asparagine glycosylation sites follow: Asn-632 and Asn-711.

Belongs to the peptidase S8 family.

The protein localises to the secreted. In Arabidopsis thaliana (Mouse-ear cress), this protein is Subtilisin-like protease SBT3.16.